Consider the following 294-residue polypeptide: 4-hydroxy-tetrahydrodipicolinate synthase (294 aa).

Residue Thr-47 participates in pyruvate binding. Catalysis depends on Tyr-135, which acts as the Proton donor/acceptor. The Schiff-base intermediate with substrate role is filled by Lys-163. Ile-205 is a binding site for pyruvate.

This sequence belongs to the DapA family. In terms of assembly, homotetramer; dimer of dimers.

It localises to the cytoplasm. The catalysed reaction is L-aspartate 4-semialdehyde + pyruvate = (2S,4S)-4-hydroxy-2,3,4,5-tetrahydrodipicolinate + H2O + H(+). It functions in the pathway amino-acid biosynthesis; L-lysine biosynthesis via DAP pathway; (S)-tetrahydrodipicolinate from L-aspartate: step 3/4. Its function is as follows. Catalyzes the condensation of (S)-aspartate-beta-semialdehyde [(S)-ASA] and pyruvate to 4-hydroxy-tetrahydrodipicolinate (HTPA). The polypeptide is 4-hydroxy-tetrahydrodipicolinate synthase (Rickettsia prowazekii (strain Madrid E)).